A 414-amino-acid polypeptide reads, in one-letter code: MSLGAGPEAGFSSEELLTLRFPLHRACRDGDLPALCALLQSAPRSDLAAEDSFYGWTPIHWAAHFGKLECLMQLVRAGASVNASTTRFAQTPAHIAAFGGHPQCLNWLIQVGANINKQDYVGETPIHKAARSGSVDSISALVAHGAQIDLRNASGLTAADLAHTQGFQECAQFLLNLQNCHLNRYYSNGTLNGGHRNAGPNPFSGGTSRKRSFEDVESAGVKKARTEAYSFDGLIPMMNGGVEDDADNMHVDREFAVVSDMNSSSSILNALTNGCAMNGHLDFTAAQQLSGMDTRQEECLTLAPNGIIPGVTSPSRHRIHTSNGTEEPEKAMNNPTDMCGSLHLNGSPSSCVSNRPSWVEDPGDTLHYGHYHGFGDTAESIPELSSVVEHSNSVKVEQRYDNTVLGTMYLYHGS.

5 ANK repeats span residues 18-47 (TLRF…RSDL), 54-83 (YGWT…SVNA), 88-117 (FAQT…NINK), 121-150 (VGET…QIDL), and 154-187 (SGLT…RYYS). The tract at residues 310 to 332 (GVTSPSRHRIHTSNGTEEPEKAM) is disordered.

This Gallus gallus (Chicken) protein is Ankyrin repeat domain-containing protein 10 (ANKRD10).